We begin with the raw amino-acid sequence, 250 residues long: 5'-nucleotidase SurE (250 aa).

A divalent metal cation-binding residues include Asp-8, Asp-9, Ser-39, and Asn-95.

This sequence belongs to the SurE nucleotidase family. A divalent metal cation serves as cofactor.

The protein resides in the cytoplasm. It carries out the reaction a ribonucleoside 5'-phosphate + H2O = a ribonucleoside + phosphate. Its function is as follows. Nucleotidase that shows phosphatase activity on nucleoside 5'-monophosphates. The protein is 5'-nucleotidase SurE of Syntrophobacter fumaroxidans (strain DSM 10017 / MPOB).